Here is a 119-residue protein sequence, read N- to C-terminus: HTH-type transcriptional regulator SarX (119 aa).

Residues 55–78 (LKTAMDELDLSRTKLLVSIRRLIE) constitute a DNA-binding region (H-T-H motif).

Belongs to the SarA family.

Its subcellular location is the cytoplasm. Involved in the regulation of virulence genes. Acts as a repressor of the agr locus and consequently targets genes regulated by the agr system such as sspA, hla and hlb. Binds directly to the agr promoter region. This is HTH-type transcriptional regulator SarX (sarX) from Staphylococcus aureus (strain bovine RF122 / ET3-1).